We begin with the raw amino-acid sequence, 615 residues long: MLNRFIAFFRSVFLIGLVATAFGALPARAANETAPDYALSMHGDVALPADYTHFPYTNPDAPKKGSLTVGVVGTFDSLNPFVLKSMRTTARGLYNDGEFGNMVYQTLMLRSRDEPFTLYSLLAEKVAIDPERKWVEFTLNPKAKWSDGQPVTVDDVLFTYDILTEKGRPPYNSRMSRVAKIEKTGERSVRFTFNEKSDREFPMLIAGSMPVLPKHAINRDTFGNSTLEPPIGSGPYVVASVQPGQRIVYKRNPDYWGKDLPSQRGFNNFDKISIEYYRNETSLFESFKKGILDIFIEGNPIRWEKLYDFPAVEQGKVIKDTFEKGTPADMLGFVFNTRRPIFADRRVRQALGLLFDFEWANSNLFAGQYRRTQSFWEGAQLSSVGRPADARERELLAPFPGAVREDVMNGTWHPPVTDGSGHDRVPAKKAYDLLSQAGFQFKDGMAIDPTGKPFAFEIMTRSPDEEKIALAYQRNLSRLGIAVEIHTVDDAQYQQRLQTFDYDMILGALASSLSPGNEQWLRWGSASRDVQGSFNFAGVADPAVDAMIEALLAARNRADFVSAVRALDRVLISGDYYVPLYHLPYQWVARWDRIEHPQKTPLSGYQLPAWWHTSQ.

The signal sequence occupies residues 1 to 29 (MLNRFIAFFRSVFLIGLVATAFGALPARA).

Belongs to the bacterial solute-binding protein 5 family.

The protein resides in the periplasm. This chain is Putative binding protein BruAb2_0648, found in Brucella abortus biovar 1 (strain 9-941).